A 145-amino-acid chain; its full sequence is MKASVVLSLIGYLVVPSDTAVLGRCVVAKKLHEGGLSDFEGYSLENWVCLAYFESKFNPMAVYENSRSDFIGYGLFQIRNHDWCDHGRNRCHMSCSALLNPDLKKTIECAKTIVKGKRGMGAWPSWTLNCQHSDTLARWLDGCKL.

A signal peptide spans 1-19 (MKASVVLSLIGYLVVPSDT). In terms of domain architecture, C-type lysozyme spans 20 to 145 (AVLGRCVVAK…LARWLDGCKL (126 aa)). 4 disulfides stabilise this stretch: Cys25-Cys143, Cys49-Cys130, Cys84-Cys95, and Cys91-Cys109. Glu54 is an active-site residue.

Belongs to the glycosyl hydrolase 22 family. As to quaternary structure, monomer.

Its subcellular location is the secreted. The protein localises to the cytoplasmic vesicle. It localises to the secretory vesicle. The protein resides in the acrosome. It is found in the cell projection. Its subcellular location is the cilium. The protein localises to the flagellum. May be involved in fertilization. Has no detectable bacteriolytic and lysozyme activities in vitro. This chain is Lysozyme-like protein 4 (LYZL4), found in Bos taurus (Bovine).